We begin with the raw amino-acid sequence, 128 residues long: Holo-[acyl-carrier-protein] synthase (128 aa).

Residues Asp-9 and Glu-56 each coordinate Mg(2+).

Belongs to the P-Pant transferase superfamily. AcpS family. The cofactor is Mg(2+).

The protein resides in the cytoplasm. It catalyses the reaction apo-[ACP] + CoA = holo-[ACP] + adenosine 3',5'-bisphosphate + H(+). In terms of biological role, transfers the 4'-phosphopantetheine moiety from coenzyme A to a Ser of acyl-carrier-protein. In Pelagibacter ubique (strain HTCC1062), this protein is Holo-[acyl-carrier-protein] synthase.